The chain runs to 303 residues: Acetyl-coenzyme A carboxylase carboxyl transferase subunit beta (303 aa).

One can recognise a CoA carboxyltransferase N-terminal domain in the interval 29–298; the sequence is LWVKCPETGQ…ATPAPASAAA (270 aa).

It belongs to the AccD/PCCB family. Acetyl-CoA carboxylase is a heterohexamer composed of biotin carboxyl carrier protein (AccB), biotin carboxylase (AccC) and two subunits each of ACCase subunit alpha (AccA) and ACCase subunit beta (AccD).

It is found in the cytoplasm. The enzyme catalyses N(6)-carboxybiotinyl-L-lysyl-[protein] + acetyl-CoA = N(6)-biotinyl-L-lysyl-[protein] + malonyl-CoA. It participates in lipid metabolism; malonyl-CoA biosynthesis; malonyl-CoA from acetyl-CoA: step 1/1. Its function is as follows. Component of the acetyl coenzyme A carboxylase (ACC) complex. Biotin carboxylase (BC) catalyzes the carboxylation of biotin on its carrier protein (BCCP) and then the CO(2) group is transferred by the transcarboxylase to acetyl-CoA to form malonyl-CoA. In Methylobacterium sp. (strain 4-46), this protein is Acetyl-coenzyme A carboxylase carboxyl transferase subunit beta.